Reading from the N-terminus, the 878-residue chain is Bifunctional heparan sulfate N-deacetylase/N-sulfotransferase 1 (878 aa).

At 1-17 (MSLSLKTRRFGRPVRPQ) the chain is on the cytoplasmic side. A sufficient for localization to Golgi membrane region spans residues 1-169 (MSLSLKTRRF…VEYGVGIIGF (169 aa)). The helical; Signal-anchor for type II membrane protein transmembrane segment at 18 to 38 (LVLLLLFALCLLSVFISAYYL) threads the bilayer. At 39-878 (YGWKRGLEPS…WLREELQSTR (840 aa)) the chain is on the lumenal side. The tract at residues 40-594 (GWKRGLEPSG…KRHKDIWSKE (555 aa)) is heparan sulfate N-deacetylase 1. The tract at residues 47 to 71 (PSGSEAQSPDCDEPKISPSRLLPMK) is disordered. N-linked (GlcNAc...) asparagine glycans are attached at residues Asn-231, Asn-347, and Asn-397. Positions 595–878 (KTCDRFPKLL…WLREELQSTR (284 aa)) are heparan sulfate N-sulfotransferase 1. Lys-610 (for sulfotransferase activity) is an active-site residue. Residue 610–614 (KTGTT) coordinates adenosine 3',5'-bisphosphate. N-linked (GlcNAc...) asparagine glycosylation occurs at Asn-663. Residues Ser-708 and Trp-813 each coordinate adenosine 3',5'-bisphosphate. A disulfide bridge connects residues Cys-814 and Cys-824. 829-833 (KGRKY) is a binding site for adenosine 3',5'-bisphosphate.

This sequence belongs to the sulfotransferase 1 family. NDST subfamily. As to quaternary structure, monomer.

It is found in the golgi apparatus membrane. The protein localises to the golgi apparatus. Its subcellular location is the trans-Golgi network membrane. It catalyses the reaction alpha-D-glucosaminyl-[heparan sulfate](n) + 3'-phosphoadenylyl sulfate = N-sulfo-alpha-D-glucosaminyl-[heparan sulfate](n) + adenosine 3',5'-bisphosphate + 2 H(+). The protein operates within glycan metabolism; heparan sulfate biosynthesis. It functions in the pathway glycan metabolism; heparin biosynthesis. In terms of biological role, essential bifunctional enzyme that catalyzes both the N-deacetylation and the N-sulfation of glucosamine (GlcNAc) of the glycosaminoglycan in heparan sulfate. Modifies the GlcNAc-GlcA disaccharide repeating sugar backbone to make N-sulfated heparosan, a prerequisite substrate for later modifications in heparin biosynthesis. Plays a role in determining the extent and pattern of sulfation of heparan sulfate. The protein is Bifunctional heparan sulfate N-deacetylase/N-sulfotransferase 1 (ndst1) of Xenopus tropicalis (Western clawed frog).